Reading from the N-terminus, the 429-residue chain is Tol-Pal system protein TolB (429 aa).

The first 28 residues, 1–28, serve as a signal peptide directing secretion; that stretch reads MSITPSFSRRSVVSLLAAGAFSSMSAFA.

This sequence belongs to the TolB family. In terms of assembly, the Tol-Pal system is composed of five core proteins: the inner membrane proteins TolA, TolQ and TolR, the periplasmic protein TolB and the outer membrane protein Pal. They form a network linking the inner and outer membranes and the peptidoglycan layer.

It is found in the periplasm. Functionally, part of the Tol-Pal system, which plays a role in outer membrane invagination during cell division and is important for maintaining outer membrane integrity. The chain is Tol-Pal system protein TolB from Polaromonas naphthalenivorans (strain CJ2).